We begin with the raw amino-acid sequence, 731 residues long: Pre-B-cell leukemia transcription factor-interacting protein 1 (731 aa).

Polar residues predominate over residues methionine 1–serine 10. The interval methionine 1–aspartate 155 is disordered. Serine 43 is subject to Phosphoserine. Polar residues-rich tracts occupy residues leucine 62–threonine 75 and leucine 121–serine 132. A phosphoserine mark is found at serine 129, serine 146, serine 147, and serine 148. A Phosphothreonine modification is found at threonine 152. The stretch at leucine 270–glycine 348 forms a coiled coil. 3 disordered regions span residues leucine 354–glutamate 377, glycine 447–proline 572, and leucine 698–glycine 731. Residues lysine 364–glutamate 375 show a composition bias toward basic and acidic residues. The stretch at glutamate 377 to glutamine 417 forms a coiled coil. Basic and acidic residues-rich tracts occupy residues tryptophan 472–arginine 499, glutamine 508–arginine 543, and serine 551–aspartate 569. A Nuclear localization signal motif is present at residues arginine 485 to tryptophan 505. Residue serine 567 is modified to Phosphoserine. Positions aspartate 695–glycine 720 match the Nuclear localization signal motif. Basic residues predominate over residues leucine 698 to lysine 707.

As to quaternary structure, interacts with TEX11. Interacts with ESR1, PBX1, PBX2 and PBX3. In terms of tissue distribution, expressed in early hematopoietic precursors.

It localises to the cytoplasm. It is found in the cytoskeleton. The protein resides in the nucleus. Regulator of pre-B-cell leukemia transcription factors (BPXs) function. Inhibits the binding of PBX1-HOX complex to DNA and blocks the transcriptional activity of E2A-PBX1. Tethers estrogen receptor-alpha (ESR1) to microtubules and allows them to influence estrogen receptors-alpha signaling. This chain is Pre-B-cell leukemia transcription factor-interacting protein 1 (PBXIP1), found in Homo sapiens (Human).